A 172-amino-acid polypeptide reads, in one-letter code: HTH-type transcriptional regulator IscR (172 aa).

Residues 2–131 (RLTSKGRYAV…NNITLGELMR (130 aa)) form the HTH rrf2-type domain. Positions 28-51 (LADISERQGISLSYLEQLFSRLRK) form a DNA-binding region, H-T-H motif. [2Fe-2S] cluster-binding residues include C92, C98, and C104.

Requires [2Fe-2S] cluster as cofactor.

Functionally, regulates the transcription of several operons and genes involved in the biogenesis of Fe-S clusters and Fe-S-containing proteins. In Photobacterium profundum (strain SS9), this protein is HTH-type transcriptional regulator IscR.